Reading from the N-terminus, the 514-residue chain is Membrane-bound lytic murein transglycosylase F (514 aa).

Positions Met-1 to Gly-30 are cleaved as a signal peptide. The non-LT domain stretch occupies residues Lys-31 to Gly-269. The interval Asp-270 to Lys-514 is LT domain. Glu-314 is a catalytic residue.

In the N-terminal section; belongs to the bacterial solute-binding protein 3 family. This sequence in the C-terminal section; belongs to the transglycosylase Slt family.

The protein localises to the cell outer membrane. It carries out the reaction Exolytic cleavage of the (1-&gt;4)-beta-glycosidic linkage between N-acetylmuramic acid (MurNAc) and N-acetylglucosamine (GlcNAc) residues in peptidoglycan, from either the reducing or the non-reducing ends of the peptidoglycan chains, with concomitant formation of a 1,6-anhydrobond in the MurNAc residue.. Murein-degrading enzyme that degrades murein glycan strands and insoluble, high-molecular weight murein sacculi, with the concomitant formation of a 1,6-anhydromuramoyl product. Lytic transglycosylases (LTs) play an integral role in the metabolism of the peptidoglycan (PG) sacculus. Their lytic action creates space within the PG sacculus to allow for its expansion as well as for the insertion of various structures such as secretion systems and flagella. This is Membrane-bound lytic murein transglycosylase F from Salmonella paratyphi A (strain ATCC 9150 / SARB42).